Here is a 398-residue protein sequence, read N- to C-terminus: Lysophospholipid acyltransferase LPEAT1 (398 aa).

The interval 1-24 is disordered; that stretch reads MESELKDLNSNSNPPSSKEDRPLL. S28 carries the phosphoserine modification. Residues 66–86 form a helical membrane-spanning segment; sequence LAVALVTLVPLRFLLSMSILL. The tract at residues 158–185 is disordered; it reads RDSDMDSNPKTTSTEINQKGEAATEEPE. Positions 163–174 are enriched in polar residues; it reads DSNPKTTSTEIN. The HXXXXD motif signature appears at 194–199; that stretch reads HVSYLD.

It belongs to the 1-acyl-sn-glycerol-3-phosphate acyltransferase family.

The protein resides in the endoplasmic reticulum membrane. It catalyses the reaction a 1-acyl-sn-glycero-3-phosphoethanolamine + an acyl-CoA = a 1,2-diacyl-sn-glycero-3-phosphoethanolamine + CoA. It carries out the reaction a 1-acyl-sn-glycero-3-phosphate + an acyl-CoA = a 1,2-diacyl-sn-glycero-3-phosphate + CoA. The enzyme catalyses a 1-acyl-sn-glycero-3-phosphocholine + an acyl-CoA = a 1,2-diacyl-sn-glycero-3-phosphocholine + CoA. The catalysed reaction is a 1-acyl-sn-glycero-3-phospho-L-serine + an acyl-CoA = a 1,2-diacyl-sn-glycero-3-phospho-L-serine + CoA. The protein operates within lipid metabolism; phospholipid metabolism. Possesses acyl-CoA-dependent lysophospholipid acyltransferase activity with a subset of lysophospholipids as substrates. Exhibits strong acylation activity on lysophosphatidylethanolamine (LPE) and lysophosphatidate (LPA), and lower activity on lysophosphatidylcholine (LPC) and lysophosphatidylserine (LPS). Exhibits acylation activity on both LPE and LPC. Has a preference for 18:1-LPE over 16:0-LPE as acceptor. Palmitoyl-CoA (16:0-CoA) is a better acyl donor than oleoyl-CoA (18:1-CoA). Among several different acyl-CoA species the best acyl donor is palmitoyl-CoA (16:0-CoA). Activity is calcium-independent. Its activity is essential for maintaining adequate levels of phosphatidylethanolamine (PE), LPE and LPC in the cells, which is crucial for plant growth regulation. The chain is Lysophospholipid acyltransferase LPEAT1 from Arabidopsis thaliana (Mouse-ear cress).